Consider the following 566-residue polypeptide: Putative sulfite reductase [NADPH] hemoprotein beta-component (566 aa).

Residues Cys-430, Cys-436, Cys-475, and Cys-479 each contribute to the [4Fe-4S] cluster site. Cys-479 lines the siroheme pocket.

Belongs to the nitrite and sulfite reductase 4Fe-4S domain family. As to quaternary structure, alpha(8)-beta(8). The alpha component is a flavoprotein, the beta component is a hemoprotein. Siroheme serves as cofactor. It depends on [4Fe-4S] cluster as a cofactor.

It catalyses the reaction hydrogen sulfide + 3 NADP(+) + 3 H2O = sulfite + 3 NADPH + 4 H(+). It functions in the pathway sulfur metabolism; hydrogen sulfide biosynthesis; hydrogen sulfide from sulfite (NADPH route): step 1/1. Component of the sulfite reductase complex that catalyzes the 6-electron reduction of sulfite to sulfide. This is one of several activities required for the biosynthesis of L-cysteine from sulfate. The polypeptide is Putative sulfite reductase [NADPH] hemoprotein beta-component (Buchnera aphidicola subsp. Schizaphis graminum (strain Sg)).